We begin with the raw amino-acid sequence, 234 residues long: AA9 family lytic polysaccharide monooxygenase D (234 aa).

The first 18 residues, 1 to 18, serve as a signal peptide directing secretion; it reads MRIEKLLNAALLAGAVSA. Cu(2+) is bound by residues His-19 and His-95. Cys-57 and Cys-182 are joined by a disulfide. O2 contacts are provided by His-168 and Gln-177. A Cu(2+)-binding site is contributed by Tyr-179.

It belongs to the polysaccharide monooxygenase AA9 family. It depends on Cu(2+) as a cofactor.

The protein localises to the secreted. It carries out the reaction [(1-&gt;4)-beta-D-glucosyl]n+m + reduced acceptor + O2 = 4-dehydro-beta-D-glucosyl-[(1-&gt;4)-beta-D-glucosyl]n-1 + [(1-&gt;4)-beta-D-glucosyl]m + acceptor + H2O.. Functionally, lytic polysaccharide monooxygenase (LPMO) that depolymerizes crystalline and amorphous polysaccharides via the oxidation of scissile alpha- or beta-(1-4)-glycosidic bonds, yielding C1 or C4 oxidation products. Catalysis by LPMOs requires the reduction of the active-site copper from Cu(II) to Cu(I) by a reducing agent and H(2)O(2) or O(2) as a cosubstrate. This Malbranchea cinnamomea (Thermophilic fungus) protein is AA9 family lytic polysaccharide monooxygenase D.